The sequence spans 492 residues: Protein nucleotidyltransferase YdiU (492 aa).

Residues Gly91, Gly93, Arg94, Lys114, Asp126, Gly127, Arg177, and Arg184 each contribute to the ATP site. Asp253 serves as the catalytic Proton acceptor. Mg(2+) contacts are provided by Asn254 and Asp263. Asp263 is a binding site for ATP.

The protein belongs to the SELO family. Requires Mg(2+) as cofactor. The cofactor is Mn(2+).

It carries out the reaction L-seryl-[protein] + ATP = 3-O-(5'-adenylyl)-L-seryl-[protein] + diphosphate. The catalysed reaction is L-threonyl-[protein] + ATP = 3-O-(5'-adenylyl)-L-threonyl-[protein] + diphosphate. It catalyses the reaction L-tyrosyl-[protein] + ATP = O-(5'-adenylyl)-L-tyrosyl-[protein] + diphosphate. The enzyme catalyses L-histidyl-[protein] + UTP = N(tele)-(5'-uridylyl)-L-histidyl-[protein] + diphosphate. It carries out the reaction L-seryl-[protein] + UTP = O-(5'-uridylyl)-L-seryl-[protein] + diphosphate. The catalysed reaction is L-tyrosyl-[protein] + UTP = O-(5'-uridylyl)-L-tyrosyl-[protein] + diphosphate. Functionally, nucleotidyltransferase involved in the post-translational modification of proteins. It can catalyze the addition of adenosine monophosphate (AMP) or uridine monophosphate (UMP) to a protein, resulting in modifications known as AMPylation and UMPylation. The sequence is that of Protein nucleotidyltransferase YdiU from Maridesulfovibrio salexigens (strain ATCC 14822 / DSM 2638 / NCIMB 8403 / VKM B-1763) (Desulfovibrio salexigens).